The sequence spans 79 residues: uncharacterized protein (79 aa).

The protein belongs to the asfivirus D79L family.

This is an uncharacterized protein from Ornithodoros (relapsing fever ticks).